Reading from the N-terminus, the 81-residue chain is MQSLQILAIVSLVVVAIIAIVVWTIVLIEYRKILRQRKIDRLFDRIREKAEDSGNESERDQEELSALVEMGHLAPWDVDDL.

Residues 1–7 are Extracellular-facing; it reads MQSLQIL. The chain crosses the membrane as a helical span at residues 8–28; it reads AIVSLVVVAIIAIVVWTIVLI. The Cytoplasmic portion of the chain corresponds to 29–81; it reads EYRKILRQRKIDRLFDRIREKAEDSGNESERDQEELSALVEMGHLAPWDVDDL. Phosphoserine; by host CK2 is present on residues serine 53 and serine 57.

The protein belongs to the HIV-1 VPU protein family. Homopentamer. Interacts with host CD4 and BRTC; these interactions induce proteasomal degradation of CD4. Interacts with host BST2; this interaction leads to the degradation of host BST2. Interacts with host FBXW11. Interacts with host AP1M1; this interaction plays a role in the mistrafficking and subsequent degradation of host BST2. Interacts with host RANBP2; this interaction allows Vpu to down-regulate host BLM sumoylation. Phosphorylated by host CK2. This phosphorylation is necessary for interaction with human BTRC and degradation of CD4.

It is found in the host membrane. Ion channel activity is inhibited by hexamethylene amiloride in vitro. In terms of biological role, enhances virion budding by targeting host CD4 and Tetherin/BST2 to proteasome degradation. Degradation of CD4 prevents any unwanted premature interactions between viral Env and its host receptor CD4 in the endoplasmic reticulum. Degradation of antiretroviral protein Tetherin/BST2 is important for virion budding, as BST2 tethers new viral particles to the host cell membrane. Mechanistically, Vpu bridges either CD4 or BST2 to BTRC, a substrate recognition subunit of the Skp1/Cullin/F-box protein E3 ubiquitin ligase, induces their ubiquitination and subsequent proteasomal degradation. The alteration of the E3 ligase specificity by Vpu seems to promote the degradation of host IKBKB, leading to NF-kappa-B down-regulation and subsequent apoptosis. Acts as a viroporin that forms an oligomeric ion channel in membranes. Modulates the host DNA repair mechanisms to promote degradation of nuclear viral cDNA in cells that are already productively infected in order to suppress immune sensing and proviral hyper-integration (superinfection). Manipulates PML-NBs and modulates SUMOylation of host BLM protein thereby enhancing its DNA-end processing activity toward viral unintegrated linear DNA. Also inhibits RAD52-mediated homologous repair of viral cDNA, preventing the generation of dead-end circular forms of single copies of the long terminal repeat and permitting sustained nucleolytic attack. The polypeptide is Protein Vpu (Homo sapiens (Human)).